The primary structure comprises 323 residues: Pseudouridylate synthase TRUB2, mitochondrial (323 aa).

Asp98 serves as the catalytic Nucleophile. The segment at 302–323 is disordered; that stretch reads SGHQQQLPSAGQPWASRVQAPL.

The protein belongs to the pseudouridine synthase TruB family. In terms of assembly, forms a regulatory protein-RNA complex, consisting of RCC1L, NGRN, RPUSD3, RPUSD4, TRUB2, FASTKD2 and 16S mt-rRNA.

The protein resides in the mitochondrion matrix. It carries out the reaction a uridine in mRNA = a pseudouridine in mRNA. The enzyme catalyses uridine(55) in tRNA = pseudouridine(55) in tRNA. Minor enzyme contributing to the isomerization of uridine to pseudouridine (pseudouridylation) of specific mitochondrial mRNAs (mt-mRNAs) such as COXI and COXIII mt-mRNAs. As a component of a functional protein-RNA module, consisting of RCC1L, NGRN, RPUSD3, RPUSD4, TRUB2, FASTKD2 and 16S mitochondrial ribosomal RNA (16S mt-rRNA), controls 16S mt-rRNA abundance and is required for intra-mitochondrial translation. Also catalyzes pseudouridylation of some tRNAs, including synthesis of pseudouridine(55) from uracil-55, in the psi GC loop of a subset of tRNAs. This chain is Pseudouridylate synthase TRUB2, mitochondrial, found in Rattus norvegicus (Rat).